The chain runs to 393 residues: Protein TsgA (393 aa).

Helical transmembrane passes span 11–31 (WISF…GMVM), 51–71 (FLNA…EIVP), 78–98 (FGFL…SLAL), 101–121 (AAMF…TFLV), 134–154 (LLFT…IAAF), 162–182 (WYWV…LTFG), 206–226 (IGVL…LGFI), 245–265 (TLVS…SFIL), 273–293 (ILTV…TGTP), 297–317 (AWSI…IITL), 332–352 (FVLT…GPIV), and 361–381 (LLTA…LGFV).

The protein belongs to the major facilitator superfamily. TsgA family.

It localises to the cell inner membrane. This is Protein TsgA from Escherichia coli O6:K15:H31 (strain 536 / UPEC).